The chain runs to 354 residues: Uroporphyrinogen decarboxylase (354 aa).

Substrate is bound by residues 30–34, aspartate 79, tyrosine 154, serine 209, and histidine 333; that span reads RQAGR.

The protein belongs to the uroporphyrinogen decarboxylase family. In terms of assembly, homodimer.

It localises to the cytoplasm. It catalyses the reaction uroporphyrinogen III + 4 H(+) = coproporphyrinogen III + 4 CO2. It functions in the pathway porphyrin-containing compound metabolism; protoporphyrin-IX biosynthesis; coproporphyrinogen-III from 5-aminolevulinate: step 4/4. Its function is as follows. Catalyzes the decarboxylation of four acetate groups of uroporphyrinogen-III to yield coproporphyrinogen-III. In Mycolicibacterium vanbaalenii (strain DSM 7251 / JCM 13017 / BCRC 16820 / KCTC 9966 / NRRL B-24157 / PYR-1) (Mycobacterium vanbaalenii), this protein is Uroporphyrinogen decarboxylase.